We begin with the raw amino-acid sequence, 944 residues long: Serine/threonine-protein kinase PLK4 (944 aa).

Residues 12 to 265 form the Protein kinase domain; the sequence is FKVLNLLGKG…LSSVLDHAFM (254 aa). ATP is bound by residues 18–26 and K41; that span reads LGKGSFACV. D136 acts as the Proton acceptor in catalysis. Disordered regions lie at residues 327–396, 432–463, and 530–561; these read KDKH…YSER, RSLE…RSND, and LGIK…QQAF. The segment covering 378 to 394 has biased composition (polar residues); sequence RSGTSQSQTYAKPSSYS. Basic and acidic residues predominate over residues 432 to 447; it reads RSLERHTSPPVKEKTP. Residues 548–561 show a composition bias toward polar residues; sequence FGEQSKSRVPQQAF. Residues 565-678 form the Cryptic POLO box 1 (CPB1) domain; it reads TLRSIISPLN…AKFIKLVRSK (114 aa). The region spanning 679–791 is the Cryptic POLO box 2 (CPB2) domain; that stretch reads TPKVTYYTRY…GRRPALAESP (113 aa). Residues 786–809 form a disordered region; it reads ALAESPKTQPTPSVDSARERKEEQ. The POLO box domain maps to 862–940; the sequence is QVLKSVFVEN…LSSILMLFAS (79 aa).

It belongs to the protein kinase superfamily. Ser/Thr protein kinase family. CDC5/Polo subfamily. As to quaternary structure, homodimer. Post-translationally, ubiquitinated; leading to its degradation by the proteasome.

The protein localises to the cytoplasm. It localises to the cytoskeleton. The protein resides in the microtubule organizing center. It is found in the centrosome. Its subcellular location is the centriole. The catalysed reaction is L-seryl-[protein] + ATP = O-phospho-L-seryl-[protein] + ADP + H(+). The enzyme catalyses L-threonyl-[protein] + ATP = O-phospho-L-threonyl-[protein] + ADP + H(+). Functionally, serine/threonine-protein kinase that plays a central role in centriole duplication. Able to trigger procentriole formation on the surface of the parental centriole cylinder, leading to the recruitment of centriole biogenesis proteins such as sass6, cpap, ccp110, cep135 and gamma-tubulin. When overexpressed, it is able to induce centrosome amplification through the simultaneous generation of multiple procentrioles adjoining each parental centriole during S phase. Its central role in centriole replication suggests a possible role in tumorigenesis, centrosome aberrations being frequently observed in tumors. Also involved in deuterosome-mediated centriole amplification in multiciliated that can generate more than 100 centrioles. The chain is Serine/threonine-protein kinase PLK4 from Xenopus laevis (African clawed frog).